A 742-amino-acid polypeptide reads, in one-letter code: Pyriculol/pyriculariol biosynthesis cluster transcription factor 1 (742 aa).

The zn(2)-C6 fungal-type DNA-binding region spans 23–49 (CVLCQHRKIKCDRSFPCANCQRANVQC). The disordered stretch occupies residues 85–116 (GKPDIARLTTKRSSLSQSPPKGEEPLPEWNRH). Residues 105 to 116 (KGEEPLPEWNRH) are compositionally biased toward basic and acidic residues.

It is found in the nucleus. Transcriptional regulator; part of the gene cluster that mediates the biosynthesis of pyriculol and pyriculariol, two heptaketides that induce lesion formation upon application on rice leaves but are dispensable for pathogenicity. With TRF2, negatively regulates the expression of the gene cluster and the subsequent pyriculol and pyriculariol production. The chain is Pyriculol/pyriculariol biosynthesis cluster transcription factor 1 from Pyricularia oryzae (strain 70-15 / ATCC MYA-4617 / FGSC 8958) (Rice blast fungus).